A 467-amino-acid polypeptide reads, in one-letter code: Dimethylamine methyltransferase MtbB3 (467 aa).

Residue pyrrolysine 356 is a non-standard amino acid, pyrrolysine.

It belongs to the dimethylamine methyltransferase family.

It carries out the reaction Co(I)-[dimethylamine-specific corrinoid protein] + dimethylamine + H(+) = methyl-Co(III)-[dimethylamine-specific corrinoid protein] + methylamine. Its pathway is one-carbon metabolism; methanogenesis from dimethylamine. Its function is as follows. Catalyzes the transfer of a methyl group from dimethylamine to the corrinoid cofactor of MtbC. The chain is Dimethylamine methyltransferase MtbB3 (mtbB3) from Methanosarcina acetivorans (strain ATCC 35395 / DSM 2834 / JCM 12185 / C2A).